The following is a 2353-amino-acid chain: Nonribosomal peptide synthetase 7 (2353 aa).

Residues Thr-305 to Val-684 form an adenylation 1 region. The Carrier 1 domain maps to Arg-776–Pro-853. Ser-813 carries the post-translational modification O-(pantetheine 4'-phosphoryl)serine. The tract at residues Glu-885–Val-1147 is condensation 1. The interval Thr-1338–Val-1725 is adenylation 2. Residues Glu-1826–Gln-1902 enclose the Carrier 2 domain. O-(pantetheine 4'-phosphoryl)serine is present on Ser-1863. The tract at residues Glu-1939 to Tyr-2214 is condensation 2.

It belongs to the NRP synthetase family.

Functionally, nonribosomal peptide synthesis (NRPS) is a key mechanism responsible for the biosynthesis of bioactive metabolites which are potentially contributing to organismal virulence. The sequence is that of Nonribosomal peptide synthetase 7 (NRPS7) from Aspergillus fumigatus (strain ATCC MYA-4609 / CBS 101355 / FGSC A1100 / Af293) (Neosartorya fumigata).